Consider the following 242-residue polypeptide: MLLGVNIDHIATVRNARGTTYPSPVEAALVAETHGADLITMHLREDRRHIKDADVFAVKNAIRTRLNLEMALTEEMLENALKVMPEDVCIVPEKRQEITTEGGLDVLAQQEKIAGFTKILTDAGIRVSLFIDADDRQIQAAYDVGAPVVELHTGAYADARSHAEQLKQFERLQNGAHFAGDLGLVVNAGHGLTIHNVTPIAQILAIRELNIGHSLIAQALFLGLPEAVRQMKEAMFRARLLP.

Residue N6 participates in 3-amino-2-oxopropyl phosphate binding. 8-9 (DH) lines the 1-deoxy-D-xylulose 5-phosphate pocket. Position 17 (R17) interacts with 3-amino-2-oxopropyl phosphate. H42 functions as the Proton acceptor in the catalytic mechanism. Residues R44 and H49 each coordinate 1-deoxy-D-xylulose 5-phosphate. The Proton acceptor role is filled by E69. A 1-deoxy-D-xylulose 5-phosphate-binding site is contributed by T99. H190 serves as the catalytic Proton donor. 3-amino-2-oxopropyl phosphate contacts are provided by residues G191 and 212-213 (GH).

The protein belongs to the PNP synthase family. As to quaternary structure, homooctamer; tetramer of dimers.

It is found in the cytoplasm. It catalyses the reaction 3-amino-2-oxopropyl phosphate + 1-deoxy-D-xylulose 5-phosphate = pyridoxine 5'-phosphate + phosphate + 2 H2O + H(+). It participates in cofactor biosynthesis; pyridoxine 5'-phosphate biosynthesis; pyridoxine 5'-phosphate from D-erythrose 4-phosphate: step 5/5. Its function is as follows. Catalyzes the complicated ring closure reaction between the two acyclic compounds 1-deoxy-D-xylulose-5-phosphate (DXP) and 3-amino-2-oxopropyl phosphate (1-amino-acetone-3-phosphate or AAP) to form pyridoxine 5'-phosphate (PNP) and inorganic phosphate. The chain is Pyridoxine 5'-phosphate synthase from Neisseria meningitidis serogroup C.